A 205-amino-acid polypeptide reads, in one-letter code: MTFPPLKSLLKFYAVVPTADWVGRMVKAGADTVQLRCKTLHGNELKREIARCVAACQGSRTQLFINDHWREAIEAGAYGVHLGQEDMDTADLAAIAAAGLRLGLSTHSVAELDRALFVHPGYIASGAIFQTTTKQMPTAPQGLDKLREYVEQARGTPVVAIGGIDLNNARAVLATGVSSLAAVRAVTEAANPEAVVKAFQALWDG.

4-amino-2-methyl-5-(diphosphooxymethyl)pyrimidine is bound by residues 34–38 and asparagine 66; that span reads QLRCK. Positions 67 and 86 each coordinate Mg(2+). Serine 105 contacts 4-amino-2-methyl-5-(diphosphooxymethyl)pyrimidine. 131–133 serves as a coordination point for 2-[(2R,5Z)-2-carboxy-4-methylthiazol-5(2H)-ylidene]ethyl phosphate; sequence TTT. Residue lysine 134 coordinates 4-amino-2-methyl-5-(diphosphooxymethyl)pyrimidine. 2-[(2R,5Z)-2-carboxy-4-methylthiazol-5(2H)-ylidene]ethyl phosphate is bound at residue glycine 163.

Belongs to the thiamine-phosphate synthase family. The cofactor is Mg(2+).

The catalysed reaction is 2-[(2R,5Z)-2-carboxy-4-methylthiazol-5(2H)-ylidene]ethyl phosphate + 4-amino-2-methyl-5-(diphosphooxymethyl)pyrimidine + 2 H(+) = thiamine phosphate + CO2 + diphosphate. It catalyses the reaction 2-(2-carboxy-4-methylthiazol-5-yl)ethyl phosphate + 4-amino-2-methyl-5-(diphosphooxymethyl)pyrimidine + 2 H(+) = thiamine phosphate + CO2 + diphosphate. It carries out the reaction 4-methyl-5-(2-phosphooxyethyl)-thiazole + 4-amino-2-methyl-5-(diphosphooxymethyl)pyrimidine + H(+) = thiamine phosphate + diphosphate. The protein operates within cofactor biosynthesis; thiamine diphosphate biosynthesis; thiamine phosphate from 4-amino-2-methyl-5-diphosphomethylpyrimidine and 4-methyl-5-(2-phosphoethyl)-thiazole: step 1/1. Functionally, condenses 4-methyl-5-(beta-hydroxyethyl)thiazole monophosphate (THZ-P) and 2-methyl-4-amino-5-hydroxymethyl pyrimidine pyrophosphate (HMP-PP) to form thiamine monophosphate (TMP). The sequence is that of Thiamine-phosphate synthase from Neisseria gonorrhoeae (strain ATCC 700825 / FA 1090).